The sequence spans 289 residues: Pantothenate synthetase (289 aa).

Met30–His37 contacts ATP. Residue His37 is the Proton donor of the active site. A (R)-pantoate-binding site is contributed by Gln61. Gln61 provides a ligand contact to beta-alanine. Residue Gly147–Asp150 participates in ATP binding. Position 153 (Gln153) interacts with (R)-pantoate. Residues Val176 and Lys184 to Arg187 contribute to the ATP site.

Belongs to the pantothenate synthetase family. Homodimer.

The protein resides in the cytoplasm. It carries out the reaction (R)-pantoate + beta-alanine + ATP = (R)-pantothenate + AMP + diphosphate + H(+). It participates in cofactor biosynthesis; (R)-pantothenate biosynthesis; (R)-pantothenate from (R)-pantoate and beta-alanine: step 1/1. Catalyzes the condensation of pantoate with beta-alanine in an ATP-dependent reaction via a pantoyl-adenylate intermediate. The chain is Pantothenate synthetase from Geobacillus thermodenitrificans (strain NG80-2).